We begin with the raw amino-acid sequence, 958 residues long: Importin-13 (958 aa).

HEAT repeat units follow at residues 19 to 49 (ENVEKALHQLYYDPNIENKNLAQKWLMQAQV), 51 to 83 (PQAWHFSWLLLNMDKVPEIQYSAPAPCTSRSPA), 90 to 130 (PDQY…LSMM), 137 to 174 (AVADMVRMFQAEDSNVDGRARCLALLELLTVLPEEFQT), 189 to 226 (LAQECGSVFPLLEQLLQQQDSPGFIKQKVLKCFSSWVQ), 231 to 263 (LMDCENLIQAAFTSLQDPELFDTAVEAVVNAIS), 271 to 320 (VNTL…ALLD), 325 to 367 (WQSF…DDIL), 370 to 433 (EPDK…YEML), 435 to 471 (AELLSSLYDKLGRLLTNTEQPSTWQHTEALLYGFQSI), 482 to 517 (VVPGLIGLIPRISISNVQLADTVMFTIGALSEWLAD), 519 to 553 (PVMINNVLPLVLQALGNPELSISSVSTLKKICREC), 557 to 595 (LPPYAANIVAVSQEVLMKQIHKTSQCMWLMQALGFLLSA), 598 to 643 (VEEI…SNLF), 671 to 711 (PVVV…VKTL), 715 to 749 (FAPMVPQLCEMLGQMYSTIPQASAIDLTRQLVHIF), 756 to 798 (FPPI…ALKR), 810 to 840 (VKALFHCGVLSLKFPEAPTVKASCGFFTELL), 855 to 888 (ENGKVLLQAVLEGVGGQASRSLMDHFAEILFALN), and 892 to 926 (FSYLSIWIKEAMQQDGFPSARVSPEQKETFSQQIL). The Importin N-terminal domain occupies 40-106 (AQKWLMQAQV…KSQLFTHITR (67 aa)).

This sequence belongs to the importin beta family.

Its subcellular location is the cytoplasm. It localises to the nucleus. Functionally, functions in nuclear protein import as nuclear transport receptor. Serves as receptor for nuclear localization signals (NLS) in cargo substrates. Is thought to mediate docking of the importin/substrate complex to the nuclear pore complex (NPC) through binding to nucleoporin and the complex is subsequently translocated through the pore by an energy requiring, Ran-dependent mechanism. At the nucleoplasmic side of the NPC, Ran binds to the importin, the importin/substrate complex dissociates and importin is re-exported from the nucleus to the cytoplasm where GTP hydrolysis releases Ran. The directionality of nuclear import is thought to be conferred by an asymmetric distribution of the GTP- and GDP-bound forms of Ran between the cytoplasm and nucleus. The sequence is that of Importin-13 (IPO13) from Gallus gallus (Chicken).